Reading from the N-terminus, the 147-residue chain is MSKPVYVLGGPNLNLLGTREPEIYGRDTLEDIHARLRALAGDVAIVARQTNSEGELVSWVQEAARDGRALILNAAAYTHTSIALHDALKTLKIPLIEVHLSNPAAREAFRHVNYVAPVAVGTIAGLGAYGYELALSAALRLSGEARS.

Tyrosine 24 (proton acceptor) is an active-site residue. Substrate-binding residues include asparagine 73, histidine 79, and aspartate 86. Catalysis depends on histidine 99, which acts as the Proton donor. Substrate-binding positions include 100–101 and arginine 110; that span reads LS.

Belongs to the type-II 3-dehydroquinase family. As to quaternary structure, homododecamer.

It catalyses the reaction 3-dehydroquinate = 3-dehydroshikimate + H2O. The protein operates within metabolic intermediate biosynthesis; chorismate biosynthesis; chorismate from D-erythrose 4-phosphate and phosphoenolpyruvate: step 3/7. Its function is as follows. Catalyzes a trans-dehydration via an enolate intermediate. This chain is 3-dehydroquinate dehydratase, found in Hyphomonas neptunium (strain ATCC 15444).